The following is a 339-amino-acid chain: Glycerol-3-phosphate dehydrogenase [NAD(P)+] (339 aa).

NADPH is bound by residues S15, Y16, H36, and K110. K110, G139, and T141 together coordinate sn-glycerol 3-phosphate. A143 contributes to the NADPH binding site. Sn-glycerol 3-phosphate contacts are provided by K195, D248, S258, R259, and N260. K195 (proton acceptor) is an active-site residue. R259 contributes to the NADPH binding site. NADPH is bound by residues V283 and E285.

It belongs to the NAD-dependent glycerol-3-phosphate dehydrogenase family.

It is found in the cytoplasm. The catalysed reaction is sn-glycerol 3-phosphate + NAD(+) = dihydroxyacetone phosphate + NADH + H(+). The enzyme catalyses sn-glycerol 3-phosphate + NADP(+) = dihydroxyacetone phosphate + NADPH + H(+). It functions in the pathway membrane lipid metabolism; glycerophospholipid metabolism. Functionally, catalyzes the reduction of the glycolytic intermediate dihydroxyacetone phosphate (DHAP) to sn-glycerol 3-phosphate (G3P), the key precursor for phospholipid synthesis. The polypeptide is Glycerol-3-phosphate dehydrogenase [NAD(P)+] (Escherichia fergusonii (strain ATCC 35469 / DSM 13698 / CCUG 18766 / IAM 14443 / JCM 21226 / LMG 7866 / NBRC 102419 / NCTC 12128 / CDC 0568-73)).